Here is a 471-residue protein sequence, read N- to C-terminus: MENFKHLPEPFRIRVIEPVKRTTRAYRDEAILKAGMNLFLLDSEDIFIDLLTDSGTGAVTQDMQAAMLRGDEAYSGSRSYYALANAVKEIFGYEYTIPTHQGRGAEQIYIPVLIKKREQEKGLDRNKMVVFSNYFFDTTQGHSQLNGATVRNVYIKEAFDTDVDHDFKGNFDLEKLEQGILEVGANNVPYIVCTITCNSAGGQPVSLANMKAMYQIARKYDIPVIMDSARFAENAYFIQQREAEYKDWTIEQITYESYKYADALAMSAKKDAMVPIGGLLCFKDNSMEDVYNECRTLCVVQEGFPTYGGLEGGAMERLAVGLRDGMRQDWLAYRISQIEYLVQGLEKIGVVCQQPGGHAAFVDAGKLLPHIPAEQFPAQALACELYKVAGIRSVEIGSLLLGRDPKTGQQLPCPAELLRLTIPRATYTQTHMDFIIEAFKQVKENAKNIKGLDFTYEPKVLRHFTARLKEI.

The residue at position 270 (K270) is an N6-(pyridoxal phosphate)lysine.

It belongs to the beta-eliminating lyase family. Homotetramer. It depends on pyridoxal 5'-phosphate as a cofactor.

The enzyme catalyses L-tryptophan + H2O = indole + pyruvate + NH4(+). It functions in the pathway amino-acid degradation; L-tryptophan degradation via pyruvate pathway; indole and pyruvate from L-tryptophan: step 1/1. The polypeptide is Tryptophanase (Histophilus somni (strain 2336) (Haemophilus somnus)).